We begin with the raw amino-acid sequence, 415 residues long: L-cysteine:1D-myo-inositol 2-amino-2-deoxy-alpha-D-glucopyranoside ligase 2 (415 aa).

Cys-44 is a Zn(2+) binding site. L-cysteinyl-5'-AMP is bound by residues 44–47 (CGIT), Thr-59, and 82–84 (NIT). The 'HIGH' region signature appears at 46–56 (ITPYDSTHLGH). The 'ERGGDP' region signature appears at 188 to 193 (ERGGDP). Trp-228 contacts L-cysteinyl-5'-AMP. Residue Cys-232 coordinates Zn(2+). L-cysteinyl-5'-AMP is bound at residue 250 to 252 (GSD). His-257 contributes to the Zn(2+) binding site. Ile-284 contacts L-cysteinyl-5'-AMP. A 'KMSKS' region motif is present at residues 290 to 294 (KMSKS).

This sequence belongs to the class-I aminoacyl-tRNA synthetase family. MshC subfamily. As to quaternary structure, monomer. It depends on Zn(2+) as a cofactor.

The catalysed reaction is 1D-myo-inositol 2-amino-2-deoxy-alpha-D-glucopyranoside + L-cysteine + ATP = 1D-myo-inositol 2-(L-cysteinylamino)-2-deoxy-alpha-D-glucopyranoside + AMP + diphosphate + H(+). Catalyzes the ATP-dependent condensation of GlcN-Ins and L-cysteine to form L-Cys-GlcN-Ins. This Corynebacterium jeikeium (strain K411) protein is L-cysteine:1D-myo-inositol 2-amino-2-deoxy-alpha-D-glucopyranoside ligase 2.